The sequence spans 339 residues: Phenylalanine--tRNA ligase alpha subunit (339 aa).

Glu250 serves as a coordination point for Mg(2+).

The protein belongs to the class-II aminoacyl-tRNA synthetase family. Phe-tRNA synthetase alpha subunit type 1 subfamily. In terms of assembly, tetramer of two alpha and two beta subunits. Mg(2+) serves as cofactor.

It is found in the cytoplasm. It catalyses the reaction tRNA(Phe) + L-phenylalanine + ATP = L-phenylalanyl-tRNA(Phe) + AMP + diphosphate + H(+). The protein is Phenylalanine--tRNA ligase alpha subunit of Parabacteroides distasonis (strain ATCC 8503 / DSM 20701 / CIP 104284 / JCM 5825 / NCTC 11152).